The following is a 2968-amino-acid chain: Polyketide synthase 37 (2968 aa).

Residues 32–454 (KEPIAIIGIG…GSNSSLFLSS (423 aa)) form the Ketosynthase family 3 (KS3) domain. Residues cysteine 198, histidine 338, and histidine 378 each act as for beta-ketoacyl synthase activity in the active site. The tract at residues 624 to 950 (FIFSGQGQQW…LSTLSKNSNS (327 aa)) is malonyl-CoA:ACP transacylase (MAT) domain. The For malonyltransferase activity role is filled by serine 718. The interval 1017–1157 (PPMFISLDRK…GIIKYGTNYL (141 aa)) is N-terminal hotdog fold. Positions 1017 to 1350 (PPMFISLDRK…FKGINSSSSS (334 aa)) constitute a PKS/mFAS DH domain. The segment at 1031–1345 (TPSFEVRLNQ…LTNLEFKGIN (315 aa)) is dehydratase (DH) domain. The Proton acceptor; for dehydratase activity role is filled by histidine 1049. Residues 1183 to 1350 (FKSFNSNEFY…FKGINSSSSS (168 aa)) are C-terminal hotdog fold. Aspartate 1257 functions as the Proton donor; for dehydratase activity in the catalytic mechanism. The disordered stretch occupies residues 1522 to 1547 (SCGGGGGSTNNTISNSSSSISSIDNG). A compositionally biased stretch (low complexity) spans 1530–1547 (TNNTISNSSSSISSIDNG). The interval 1718–2053 (GIISDLKIKQ…SGNHIGKILI (336 aa)) is enoyl reductase (ER) domain. The segment at 2083 to 2277 (TYIFTGFGGL…LKSSCIHLAS (195 aa)) is ketoreductase (KR) domain. The segment at 2379-2400 (GDGSFDDLNQLEDEGQQGFGNG) is disordered. A Carrier domain is found at 2421-2498 (FDNDFYTKSI…STVELIKNKL (78 aa)). Residue serine 2458 is modified to O-(pantetheine 4'-phosphoryl)serine. Residues 2568 to 2589 (SSSSNNSNSKNELTSPPPSAKR) are disordered. The tract at residues 2707-2968 (ISHVVGVTST…IEAILFKLIK (262 aa)) is chalcone synthase. The active site involves cysteine 2747.

Pantetheine 4'-phosphate is required as a cofactor.

It catalyses the reaction (E)-4-coumaroyl-CoA + 3 malonyl-CoA + 3 H(+) = 2',4,4',6'-tetrahydroxychalcone + 3 CO2 + 4 CoA. It carries out the reaction hexanoyl-CoA + 3 malonyl-CoA + 3 H(+) = 2,4,6-trihydroxyphenylhexan-1-one + 3 CO2 + 4 CoA. It functions in the pathway secondary metabolite biosynthesis; flavonoid biosynthesis. Polyketide synthase; part of the gene cluster that mediates the biosynthesis of DIF-1 (Differentiation Inducing Factor-1), a signal molecule involved in the differentiation of pstO (prestalk-O) cells. The three-step process begins with the formation of (2,4,6-trihydroxyphenyl)-1-hexan-1-one (THPH) by the polyketide synthase StlB. THPH is then dichlorinated by the flavin-dependent halogenase ChlA. The last step of DIF-1 biosynthesis is the O-methylation of dichloro-THPH (or des-methyl-DIF-1) by the methyltransferase DmtA to yield DIF-1. This is Polyketide synthase 37 (StlB) from Dictyostelium discoideum (Social amoeba).